The following is a 188-amino-acid chain: ATP synthase subunit b, chloroplastic (188 aa).

A helical transmembrane segment spans residues 35–57; sequence LINLAVVIGVLVYFGKGVLTTLL.

This sequence belongs to the ATPase B chain family. In terms of assembly, F-type ATPases have 2 components, F(1) - the catalytic core - and F(0) - the membrane proton channel. F(1) has five subunits: alpha(3), beta(3), gamma(1), delta(1), epsilon(1). F(0) has four main subunits: a(1), b(1), b'(1) and c(10-14). The alpha and beta chains form an alternating ring which encloses part of the gamma chain. F(1) is attached to F(0) by a central stalk formed by the gamma and epsilon chains, while a peripheral stalk is formed by the delta, b and b' chains.

It localises to the plastid. The protein localises to the chloroplast thylakoid membrane. Functionally, f(1)F(0) ATP synthase produces ATP from ADP in the presence of a proton or sodium gradient. F-type ATPases consist of two structural domains, F(1) containing the extramembraneous catalytic core and F(0) containing the membrane proton channel, linked together by a central stalk and a peripheral stalk. During catalysis, ATP synthesis in the catalytic domain of F(1) is coupled via a rotary mechanism of the central stalk subunits to proton translocation. Component of the F(0) channel, it forms part of the peripheral stalk, linking F(1) to F(0). The polypeptide is ATP synthase subunit b, chloroplastic (Zygnema circumcarinatum (Green alga)).